A 471-amino-acid chain; its full sequence is Adenosylhomocysteinase (471 aa).

Thr-58, Asp-133, and Glu-195 together coordinate substrate. 196 to 198 (TTT) serves as a coordination point for NAD(+). 2 residues coordinate substrate: Lys-225 and Asp-229. NAD(+) is bound by residues Asn-230, 259–264 (GFGDVG), Glu-282, Asn-317, 338–340 (IGH), and Asn-383.

It belongs to the adenosylhomocysteinase family. NAD(+) serves as cofactor.

It localises to the cytoplasm. The enzyme catalyses S-adenosyl-L-homocysteine + H2O = L-homocysteine + adenosine. It functions in the pathway amino-acid biosynthesis; L-homocysteine biosynthesis; L-homocysteine from S-adenosyl-L-homocysteine: step 1/1. Its function is as follows. May play a key role in the regulation of the intracellular concentration of adenosylhomocysteine. This is Adenosylhomocysteinase from Rhodopseudomonas palustris (strain BisB5).